Consider the following 155-residue polypeptide: Large ribosomal subunit protein uL16 (155 aa).

This sequence belongs to the universal ribosomal protein uL16 family. Part of the 50S ribosomal subunit.

Its function is as follows. Binds 23S rRNA and is also seen to make contacts with the A and possibly P site tRNAs. This is Large ribosomal subunit protein uL16 from Synechococcus sp. (strain CC9311).